A 173-amino-acid polypeptide reads, in one-letter code: UPF0398 protein SMU_470 (173 aa).

Belongs to the UPF0398 family.

The chain is UPF0398 protein SMU_470 from Streptococcus mutans serotype c (strain ATCC 700610 / UA159).